A 389-amino-acid polypeptide reads, in one-letter code: Probable zinc transporter zip2 (389 aa).

The next 7 membrane-spanning stretches (helical) occupy residues 6 to 26 (GWILSLSINAFCVFGASGIYL), 48 to 68 (LVTGLATSSGILLYSSWASVM), 88 to 108 (VFQFCAFFFGGIVFYIFNHFL), 267 to 289 (VLVAMSIHNIVEGFTIAYPLYLA), 305 to 325 (SCSLPLGSLIAFLVMEAGGIG), 329 to 349 (FLNFLYGIIFAGTAGMMLILS), and 368 to 388 (HSFICFTIGILFTLFLEIFDS).

Belongs to the ZIP transporter (TC 2.A.5) family.

Its subcellular location is the endoplasmic reticulum membrane. In terms of biological role, probable zinc transporter that may mediate zinc remobilization from the endoplasmic reticulum under zinc limitation. This is Probable zinc transporter zip2 (zip2) from Schizosaccharomyces pombe (strain 972 / ATCC 24843) (Fission yeast).